Here is a 273-residue protein sequence, read N- to C-terminus: ATP synthase subunit a (273 aa).

7 consecutive transmembrane segments (helical) span residues 41 to 61 (ILNIDSIFFTLLLGIIFLLIF), 101 to 121 (LIAPLALTIFIWIFLMNLMDL), 122 to 142 (LAVDMLPYIAMYILHIPALRV), 143 to 163 (VPSADINITLSLALGVFILII), 183 to 203 (PFNHLIFIPLNFILESVSLLS), 221 to 241 (LVFILIAGLLPWWSQWIISVP), and 247 to 267 (IIVITLQAFIFMVLTVVYIAM).

It belongs to the ATPase A chain family. As to quaternary structure, F-type ATPases have 2 components, CF(1) - the catalytic core - and CF(0) - the membrane proton channel. CF(1) has five subunits: alpha(3), beta(3), gamma(1), delta(1), epsilon(1). CF(0) has three main subunits: a(1), b(2) and c(9-12). The alpha and beta chains form an alternating ring which encloses part of the gamma chain. CF(1) is attached to CF(0) by a central stalk formed by the gamma and epsilon chains, while a peripheral stalk is formed by the delta and b chains.

It is found in the cell membrane. In terms of biological role, key component of the proton channel; it plays a direct role in the translocation of protons across the membrane. The protein is ATP synthase subunit a of Baumannia cicadellinicola subsp. Homalodisca coagulata.